The following is a 597-amino-acid chain: uncharacterized protein (597 aa).

A run of 5 helical transmembrane segments spans residues 37-57 (VLIILLGVVTQFLTNGGLWPV), 67-87 (IFWLYVGFALVFTVLAFLQFA), 109-129 (GGERIVIFFPLYLVPLTYAAI), 134-154 (SVSLLSGLLAAVAYMAAFIAW), and 162-182 (ALMTLLDYVALALRGTTLAIV). Residues 393-597 (HQLARDLHDG…QITIFVPIES (205 aa)) enclose the Histidine kinase domain.

The protein resides in the cell membrane. This is an uncharacterized protein from Chloroflexus aurantiacus (strain ATCC 29366 / DSM 635 / J-10-fl).